Here is a 386-residue protein sequence, read N- to C-terminus: Protein RETICULATA-RELATED 4, chloroplastic (386 aa).

A chloroplast-targeting transit peptide spans 1 to 61; sequence MAIASCFFCV…RRVPITPVLS (61 aa). Residues 61–99 form a disordered region; the sequence is SASSGNGGSDNNGGGLSGGGGGGDGGKNDGDGHGDEDRD. Positions 65 to 85 are enriched in gly residues; that stretch reads GNGGSDNNGGGLSGGGGGGDG. Positions 86–99 are enriched in basic and acidic residues; that stretch reads GKNDGDGHGDEDRD. The next 2 membrane-spanning stretches (helical) occupy residues 201–221 and 273–293; these read VVFADVAMAIIADFMLVYLPA and KLFAVGTTSSLVGTAITNAFI.

Belongs to the RETICULATA family.

It localises to the plastid. The protein localises to the chloroplast membrane. Its function is as follows. May play a role in leaf development. The chain is Protein RETICULATA-RELATED 4, chloroplastic from Arabidopsis thaliana (Mouse-ear cress).